The primary structure comprises 275 residues: COP9 signalosome complex subunit 7a (275 aa).

S2 carries the N-acetylserine modification. A PCI domain is found at 2–159; it reads SAEVKVTGQN…QRLEVDYSIG (158 aa). Residues 185 to 233 adopt a coiled-coil conformation; that stretch reads LSGIEEQVSRANQHKEQQLGLKQQIESEVANLKKTIKVTTAAAAAATSQ. Positions 227 to 275 are disordered; that stretch reads AAAATSQDPEQHLTELREPAPGTNQRQPSKKASKGKGLRGSAKIWSKSN. The span at 235-244 shows a compositional bias: basic and acidic residues; the sequence is PEQHLTELRE. Residues 254 to 263 are compositionally biased toward basic residues; it reads PSKKASKGKG.

It belongs to the CSN7/EIF3M family. CSN7 subfamily. Component of the CSN complex, composed of COPS1/GPS1, COPS2, COPS3, COPS4, COPS5, COPS6, COPS7 (COPS7A or COPS7B), COPS8 and COPS9. In the complex, it probably interacts directly with COPS1, COPS2, COPS4, COPS5, COPS6 and COPS8. Interacts with PMF1. Interacts with the translation initiation factor EIF3S6. Interacts with CK2 and PKD. Interacts directly with ID3. Post-translationally, phosphorylated by CK2 and PKD kinases.

It localises to the cytoplasm. The protein localises to the nucleus. Component of the COP9 signalosome complex (CSN), a complex involved in various cellular and developmental processes. The CSN complex is an essential regulator of the ubiquitin (Ubl) conjugation pathway by mediating the deneddylation of the cullin subunits of SCF-type E3 ligase complexes, leading to decrease the Ubl ligase activity of SCF-type complexes such as SCF, CSA or DDB2. The complex is also involved in phosphorylation of p53/TP53, JUN, I-kappa-B-alpha/NFKBIA, ITPK1 and IRF8/ICSBP, possibly via its association with CK2 and PKD kinases. CSN-dependent phosphorylation of TP53 and JUN promotes and protects degradation by the Ubl system, respectively. This Pongo abelii (Sumatran orangutan) protein is COP9 signalosome complex subunit 7a (COPS7A).